Reading from the N-terminus, the 347-residue chain is Dual specificity mitogen-activated protein kinase kinase 3 (347 aa).

An N-acetylmethionine modification is found at methionine 1. Residues 1–15 (MESPASSQPASMPQS) are compositionally biased toward low complexity. Residues 1-46 (MESPASSQPASMPQSKGKSKRKKDLRISCMSKPPAPNPTPPRNLDS) form a disordered region. Residues serine 3 and serine 15 each carry the phosphoserine modification. Residues 64–325 (LVTISELGRG…YLELMEHPFF (262 aa)) enclose the Protein kinase domain. Residues 70 to 78 (LGRGAYGVV) and lysine 93 each bind ATP. The active-site Proton acceptor is aspartate 190. The residue at position 218 (serine 218) is a Phosphoserine. Residue threonine 222 is modified to Phosphothreonine.

The protein belongs to the protein kinase superfamily. STE Ser/Thr protein kinase family. MAP kinase kinase subfamily. Component of a signaling complex containing at least AKAP13, PKN1, MAPK14, ZAK and MAP2K3. Within this complex, AKAP13 interacts directly with PKN1, which in turn recruits MAPK14, MAP2K3 and ZAK. Binds to DYRK1B/MIRK and increases its kinase activity. Part of a complex with MAP3K3, RAC1 and CCM2. Interacts with ARRB1. As to quaternary structure, (Microbial infection) Interacts with Yersinia YopJ. Post-translationally, autophosphorylated. Phosphorylation on Ser-218 and Thr-222 by MAP kinase kinase kinases positively regulates the kinase activity. Phosphorylated by TAOK2. (Microbial infection) Yersinia YopJ may acetylate Ser/Thr residues, preventing phosphorylation and activation, thus blocking the MAPK signaling pathway. Abundant expression is seen in the skeletal muscle. It is also widely expressed in other tissues.

The enzyme catalyses L-seryl-[protein] + ATP = O-phospho-L-seryl-[protein] + ADP + H(+). It catalyses the reaction L-threonyl-[protein] + ATP = O-phospho-L-threonyl-[protein] + ADP + H(+). It carries out the reaction L-tyrosyl-[protein] + ATP = O-phospho-L-tyrosyl-[protein] + ADP + H(+). Activated by dual phosphorylation on Ser-218 and Thr-222. Its function is as follows. Dual specificity kinase. Is activated by cytokines and environmental stress in vivo. Catalyzes the concomitant phosphorylation of a threonine and a tyrosine residue in the MAP kinase p38. Part of a signaling cascade that begins with the activation of the adrenergic receptor ADRA1B and leads to the activation of MAPK14. This Homo sapiens (Human) protein is Dual specificity mitogen-activated protein kinase kinase 3 (MAP2K3).